A 546-amino-acid polypeptide reads, in one-letter code: Probable protein kinase UbiB (546 aa).

Residues 124–502 (DFDIKPLASA…QARQGQSRYL (379 aa)) enclose the Protein kinase domain. ATP-binding positions include 130–138 (LASASIAQV) and lysine 153. Aspartate 288 serves as the catalytic Proton acceptor. The next 2 helical transmembrane spans lie at 499–519 (SRYL…LLIS) and 521–541 (VEAD…WIIG).

It belongs to the ABC1 family. UbiB subfamily.

The protein resides in the cell inner membrane. It participates in cofactor biosynthesis; ubiquinone biosynthesis [regulation]. Its function is as follows. Is probably a protein kinase regulator of UbiI activity which is involved in aerobic coenzyme Q (ubiquinone) biosynthesis. This is Probable protein kinase UbiB from Pectobacterium carotovorum subsp. carotovorum (strain PC1).